The following is a 417-amino-acid chain: Aminoacyltransferase FemB (417 aa).

This sequence belongs to the FemABX family.

It localises to the cytoplasm. It carries out the reaction MurNAc-L-Ala-D-isoglutaminyl-L-Lys-(N(6)-tri-Gly)-D-Ala-D-Ala-diphospho-di-trans,octa-cis-undecaprenyl-GlcNAc + 2 glycyl-tRNA(Gly) = MurNAc-L-Ala-D-isoglutaminyl-L-Lys-(N(6)-penta-Gly)-D-Ala-D-Ala-diphospho-di-trans,octa-cis-undecaprenyl-GlcNAc + 2 tRNA(Gly) + 2 H(+). In terms of biological role, catalyzes the incorporation of amino acid(s) into the interchain peptide bridge of peptidoglycan, using aminoacyl-tRNA as amino acid donor. The polypeptide is Aminoacyltransferase FemB (femB) (Staphylococcus epidermidis).